We begin with the raw amino-acid sequence, 374 residues long: tRNA-specific 2-thiouridylase MnmA (374 aa).

ATP contacts are provided by residues 17–24 (GMSGGVDS) and methionine 43. The segment at 103 to 105 (NPD) is interaction with target base in tRNA. Cysteine 108 (nucleophile) is an active-site residue. The cysteines at positions 108 and 204 are disulfide-linked. Glycine 132 is a binding site for ATP. The segment at 154–156 (KDQ) is interaction with tRNA. Cysteine 204 functions as the Cysteine persulfide intermediate in the catalytic mechanism. The tract at residues 316–317 (RY) is interaction with tRNA.

It belongs to the MnmA/TRMU family.

The protein localises to the cytoplasm. The enzyme catalyses S-sulfanyl-L-cysteinyl-[protein] + uridine(34) in tRNA + AH2 + ATP = 2-thiouridine(34) in tRNA + L-cysteinyl-[protein] + A + AMP + diphosphate + H(+). Catalyzes the 2-thiolation of uridine at the wobble position (U34) of tRNA, leading to the formation of s(2)U34. This is tRNA-specific 2-thiouridylase MnmA from Pseudomonas entomophila (strain L48).